The chain runs to 332 residues: DNA-directed RNA polymerase subunit alpha (332 aa).

Residues 1–227 are alpha N-terminal domain (alpha-NTD); that stretch reads MKKFAETPFL…VMYSQMSVFN (227 aa). The alpha C-terminal domain (alpha-CTD) stretch occupies residues 248–332; it reads KELVIRIDDL…LRRKLEQLKA (85 aa).

It belongs to the RNA polymerase alpha chain family. In terms of assembly, homodimer. The RNAP catalytic core consists of 2 alpha, 1 beta, 1 beta' and 1 omega subunit. When a sigma factor is associated with the core the holoenzyme is formed, which can initiate transcription.

The enzyme catalyses RNA(n) + a ribonucleoside 5'-triphosphate = RNA(n+1) + diphosphate. In terms of biological role, DNA-dependent RNA polymerase catalyzes the transcription of DNA into RNA using the four ribonucleoside triphosphates as substrates. In Aliarcobacter butzleri (strain RM4018) (Arcobacter butzleri), this protein is DNA-directed RNA polymerase subunit alpha.